The primary structure comprises 480 residues: tRNA (guanine(37)-N(1))-methyltransferase (480 aa).

The N-terminal 18 residues, 1 to 18, are a transit peptide targeting the mitochondrion; it reads MAAVWRRSARLFILLQRH. Residues His273, 311 to 312, 339 to 340, and Asn367 contribute to the S-adenosyl-L-methionine site; these read DL and DG. The disordered stretch occupies residues 458-480; it reads HTQDRDTSEEPCPKKQKCEDSTN.

This sequence belongs to the class I-like SAM-binding methyltransferase superfamily. TRM5/TYW2 family. Monomer.

It is found in the mitochondrion matrix. The protein localises to the nucleus. Its subcellular location is the cytoplasm. It carries out the reaction guanosine(37) in tRNA + S-adenosyl-L-methionine = N(1)-methylguanosine(37) in tRNA + S-adenosyl-L-homocysteine + H(+). Involved in mitochondrial tRNA methylation. Specifically methylates the N1 position of guanosine-37 in various tRNAs. Methylation is not dependent on the nature of the nucleoside 5' of the target nucleoside. This is the first step in the biosynthesis of wybutosine (yW), a modified base adjacent to the anticodon of tRNAs and required for accurate decoding. The polypeptide is tRNA (guanine(37)-N(1))-methyltransferase (trmt5) (Danio rerio (Zebrafish)).